Reading from the N-terminus, the 621-residue chain is Glutamyl-tRNA(Gln) amidotransferase subunit B, mitochondrial (621 aa).

The N-terminal 41 residues, 1–41, are a transit peptide targeting the mitochondrion; the sequence is MARLPTTELRKYLLTGQFTRRGCLHLRPSPLAPPIPPLRTL. Disordered regions lie at residues 26–86 and 106–136; these read LRPS…DNQT and SKLFSPASTPSSSSDDAVHHHHPNTHVAPFD. Low complexity-rich tracts occupy residues 38–57 and 110–120; these read LRTLSTTPPTPSDQQPQIIP and SPASTPSSSSD.

It belongs to the GatB/GatE family. GatB subfamily. In terms of assembly, subunit of the heterotrimeric GatCAB amidotransferase (AdT) complex, composed of A, B and C subunits.

The protein resides in the mitochondrion. It catalyses the reaction L-glutamyl-tRNA(Gln) + L-glutamine + ATP + H2O = L-glutaminyl-tRNA(Gln) + L-glutamate + ADP + phosphate + H(+). Functionally, allows the formation of correctly charged Gln-tRNA(Gln) through the transamidation of misacylated Glu-tRNA(Gln) in the mitochondria. The reaction takes place in the presence of glutamine and ATP through an activated gamma-phospho-Glu-tRNA(Gln). The chain is Glutamyl-tRNA(Gln) amidotransferase subunit B, mitochondrial from Podospora anserina (strain S / ATCC MYA-4624 / DSM 980 / FGSC 10383) (Pleurage anserina).